The sequence spans 411 residues: Adenylosuccinate synthetase (411 aa).

GTP-binding positions include 11–17 (GDEGKGK) and 39–41 (GHT). Catalysis depends on Asp-12, which acts as the Proton acceptor. 2 residues coordinate Mg(2+): Asp-12 and Gly-39. IMP is bound by residues 12-15 (DEGK), 37-40 (NAGH), Thr-121, Arg-135, Gln-215, Thr-230, and Arg-294. His-40 functions as the Proton donor in the catalytic mechanism. 290-296 (TTTKRPR) contributes to the substrate binding site. Residues Arg-296, 322 to 324 (KLD), and 400 to 402 (STS) each bind GTP.

The protein belongs to the adenylosuccinate synthetase family. Homodimer. Requires Mg(2+) as cofactor.

It localises to the cytoplasm. It carries out the reaction IMP + L-aspartate + GTP = N(6)-(1,2-dicarboxyethyl)-AMP + GDP + phosphate + 2 H(+). It participates in purine metabolism; AMP biosynthesis via de novo pathway; AMP from IMP: step 1/2. Plays an important role in the de novo pathway of purine nucleotide biosynthesis. Catalyzes the first committed step in the biosynthesis of AMP from IMP. This Helicobacter pylori (strain ATCC 700392 / 26695) (Campylobacter pylori) protein is Adenylosuccinate synthetase.